The chain runs to 307 residues: MGLAAPRKKTKISHDPNNTSWSRSTDGFGHRILKAQGWTPGGFLGARNATHSDLFTTASASHIRVVLKDDTLGLGARPKRNLLDGPTGLDAFKGLLGRLNGKSDTQLEAEQQKRDDAKLARYAATKWQTVRFISGGLLVQEKDNATASPASQDLRVDFPRETSSHESENGMFKMEPMDSDSQEGGCATAKEEEGKKKEKKKKNKKGKELDMSSRKSREKKQEKRQKKRKISDCDGLDAETANRTSTNVLVAVANDKGTCLLASNGPATSRERQPMGRRIFRSRHIEQKKRALMDDKSLNEVFIILSH.

A compositionally biased stretch (basic residues) spans 1-11; the sequence is MGLAAPRKKTK. Disordered stretches follow at residues 1-25 and 144-234; these read MGLA…SRST and NATA…SDCD. Residues 15–25 are compositionally biased toward polar residues; the sequence is DPNNTSWSRST. A G-patch domain is found at 25–79; that stretch reads TDGFGHRILKAQGWTPGGFLGARNATHSDLFTTASASHIRVVLKDDTLGLGARPK. Composition is skewed to basic and acidic residues over residues 154–168 and 206–221; these read LRVD…HESE and GKEL…EKKQ.

It belongs to the PINX1 family.

The protein localises to the nucleus. It is found in the nucleolus. In terms of biological role, involved in rRNA-processing at A0, A1 and A2 sites and negatively regulates telomerase. The sequence is that of Protein pxr1 (pxr1) from Neosartorya fischeri (strain ATCC 1020 / DSM 3700 / CBS 544.65 / FGSC A1164 / JCM 1740 / NRRL 181 / WB 181) (Aspergillus fischerianus).